A 123-amino-acid chain; its full sequence is WAP four-disulfide core domain protein 5 (123 aa).

The signal sequence occupies residues 1–24; that stretch reads MRTQSLLLLGALLAVGSQLPAVFG. 2 WAP domains span residues 27–74 and 75–121; these read KGEK…VPRV and SVKL…RDPA. Intrachain disulfides connect Cys34–Cys62, Cys41–Cys66, Cys49–Cys61, Cys55–Cys70, Cys81–Cys109, Cys88–Cys113, Cys96–Cys108, and Cys102–Cys117.

The protein resides in the secreted. In terms of biological role, putative acid-stable proteinase inhibitor. This Gorilla gorilla gorilla (Western lowland gorilla) protein is WAP four-disulfide core domain protein 5 (WFDC5).